We begin with the raw amino-acid sequence, 903 residues long: Zinc finger CCCH domain-containing protein 27 (903 aa).

Residues methionine 1–histidine 144 form a disordered region. Residues aspartate 11–asparagine 24 are compositionally biased toward basic and acidic residues. Residues threonine 33 to aspartate 46 show a composition bias toward acidic residues. Over residues serine 86–proline 96 the composition is skewed to basic and acidic residues. The C3H1-type zinc-finger motif lies at glycine 225–asparagine 253. The segment at alanine 390–lysine 456 is disordered. Residues glycine 397–asparagine 410 show a composition bias toward low complexity. Polar residues predominate over residues lysine 432–arginine 441. Positions arginine 459–arginine 531 constitute an RRM domain. 3 disordered regions span residues lysine 545–arginine 609, lysine 642–proline 720, and threonine 826–glutamine 903. Residues serine 556 to arginine 576 are compositionally biased toward polar residues. The segment covering alanine 577–glycine 587 has biased composition (low complexity). Positions lysine 608–serine 649 form a coiled coil. Positions serine 693 to alanine 708 are enriched in low complexity. Polar residues predominate over residues threonine 826–threonine 886.

This chain is Zinc finger CCCH domain-containing protein 27, found in Oryza sativa subsp. japonica (Rice).